The following is a 386-amino-acid chain: MAPPHNYLAVIKVVGIGGGGVNAVNRMIEQGLKGVEFIAINTDAQALLMSDADVKLDVGRDSTRGLGAGADPEVGRXAAEDAKDDIEELLRGADMVFVTAGEGGGTGTGGAPVVASIARKLGALTVGVVTRPFSFEGKRRSNQAENGIQALRESCDTLIVIPNDRLLQMGDAAVSLMDAFRSADEVLLNGVXGITDLITTPGLINVDFADVKGVMSGAGTALMGIGSARGDGRALKAAEIAINSPLLEASMEGAQGVLLSVAGGSDLGLFEINEAASLVQDAAHPEANIIFGTVIDDSLGDEVRVTVIAAGFDSAGPSRKPVVSPSAAQTQPIASARAGKVTTSLFEPTDAVSVPAHTNGATVSVGGDGDGGIADDVVDVPPLMRR.

Residues 18-22 (GGGVN), 105-107 (GTG), Glu-136, Arg-140, and Asp-184 contribute to the GTP site.

It belongs to the FtsZ family. As to quaternary structure, homodimer. Polymerizes to form a dynamic ring structure in a strictly GTP-dependent manner. Interacts directly with several other division proteins.

It is found in the cytoplasm. Essential cell division protein that forms a contractile ring structure (Z ring) at the future cell division site. The regulation of the ring assembly controls the timing and the location of cell division. One of the functions of the FtsZ ring is to recruit other cell division proteins to the septum to produce a new cell wall between the dividing cells. Binds GTP and shows GTPase activity. This Mycobacterium kansasii protein is Cell division protein FtsZ.